Consider the following 317-residue polypeptide: Actin-related protein 2/3 complex subunit 2 (317 aa).

This sequence belongs to the ARPC2 family. As to quaternary structure, component of the Arp2/3 complex composed of arp2, act2, arc1/p41-ARC, arc2/p34-ARC, arc3/p21-ARC, arc4/p20-ARC and arc5/p16-ARC.

The protein localises to the cytoplasm. The protein resides in the cytoskeleton. Its subcellular location is the actin patch. In terms of biological role, functions as actin-binding component of the Arp2/3 complex which is involved in regulation of actin polymerization and together with an activating nucleation-promoting factor (NPF) mediates the formation of branched actin networks. Seems to contact the mother actin filament. The chain is Actin-related protein 2/3 complex subunit 2 (arc2) from Schizosaccharomyces pombe (strain 972 / ATCC 24843) (Fission yeast).